The sequence spans 452 residues: Glutamate--tRNA ligase 2 (452 aa).

The 'HIGH' region motif lies at 8 to 18 (PSPTGRLHVGN). Residues 246 to 250 (KLSKR) carry the 'KMSKS' region motif. Residue Lys249 coordinates ATP.

The protein belongs to the class-I aminoacyl-tRNA synthetase family. Glutamate--tRNA ligase type 1 subfamily. As to quaternary structure, monomer.

Its subcellular location is the cytoplasm. The catalysed reaction is tRNA(Glu) + L-glutamate + ATP = L-glutamyl-tRNA(Glu) + AMP + diphosphate. Its function is as follows. Catalyzes the attachment of glutamate to tRNA(Glu) in a two-step reaction: glutamate is first activated by ATP to form Glu-AMP and then transferred to the acceptor end of tRNA(Glu). This Erythrobacter litoralis (strain HTCC2594) protein is Glutamate--tRNA ligase 2.